The following is a 426-amino-acid chain: NADH-quinone oxidoreductase subunit F (426 aa).

65-74 (GRGGAGFPTG) serves as a coordination point for NAD(+). 176-223 (GAGAYICGEETALIESLEGKRGHPRLKPPYPVQKGLWGKPTVVNNVET) is a binding site for FMN. The [4Fe-4S] cluster site is built by C347, C350, C353, and C393.

Belongs to the complex I 51 kDa subunit family. It depends on FMN as a cofactor. Requires [4Fe-4S] cluster as cofactor.

It catalyses the reaction a quinone + NADH + 5 H(+)(in) = a quinol + NAD(+) + 4 H(+)(out). Its function is as follows. NDH-1 shuttles electrons from NADH, via FMN and iron-sulfur (Fe-S) centers, to quinones in the respiratory chain. Couples the redox reaction to proton translocation (for every two electrons transferred, four hydrogen ions are translocated across the cytoplasmic membrane), and thus conserves the redox energy in a proton gradient. This Aquifex aeolicus (strain VF5) protein is NADH-quinone oxidoreductase subunit F (nuoF).